A 360-amino-acid polypeptide reads, in one-letter code: Phospho-N-acetylmuramoyl-pentapeptide-transferase (360 aa).

The next 10 membrane-spanning stretches (helical) occupy residues 26–46, 72–92, 94–114, 132–152, 168–188, 199–219, 236–256, 263–283, 288–308, and 338–358; these read AIVS…RMIA, PTMG…LWAY, SNPY…IGFV, WKYF…YLAG, VMPQ…VGTG, GLAI…AWAT, AGEL…FLWF, VFMG…IAVL, FLLV…ILQV, and VIVR…ATLK.

Belongs to the glycosyltransferase 4 family. MraY subfamily. Mg(2+) is required as a cofactor.

It is found in the cell inner membrane. The enzyme catalyses UDP-N-acetyl-alpha-D-muramoyl-L-alanyl-gamma-D-glutamyl-meso-2,6-diaminopimeloyl-D-alanyl-D-alanine + di-trans,octa-cis-undecaprenyl phosphate = di-trans,octa-cis-undecaprenyl diphospho-N-acetyl-alpha-D-muramoyl-L-alanyl-D-glutamyl-meso-2,6-diaminopimeloyl-D-alanyl-D-alanine + UMP. It participates in cell wall biogenesis; peptidoglycan biosynthesis. Catalyzes the initial step of the lipid cycle reactions in the biosynthesis of the cell wall peptidoglycan: transfers peptidoglycan precursor phospho-MurNAc-pentapeptide from UDP-MurNAc-pentapeptide onto the lipid carrier undecaprenyl phosphate, yielding undecaprenyl-pyrophosphoryl-MurNAc-pentapeptide, known as lipid I. This chain is Phospho-N-acetylmuramoyl-pentapeptide-transferase, found in Klebsiella pneumoniae subsp. pneumoniae (strain ATCC 700721 / MGH 78578).